The primary structure comprises 314 residues: 4-hydroxy-3-methylbut-2-enyl diphosphate reductase (314 aa).

A [4Fe-4S] cluster-binding site is contributed by Cys12. His43 and His81 together coordinate (2E)-4-hydroxy-3-methylbut-2-enyl diphosphate. 2 residues coordinate dimethylallyl diphosphate: His43 and His81. 2 residues coordinate isopentenyl diphosphate: His43 and His81. Cys103 lines the [4Fe-4S] cluster pocket. Position 131 (His131) interacts with (2E)-4-hydroxy-3-methylbut-2-enyl diphosphate. His131 is a binding site for dimethylallyl diphosphate. His131 is a binding site for isopentenyl diphosphate. Glu133 acts as the Proton donor in catalysis. Residue Thr170 coordinates (2E)-4-hydroxy-3-methylbut-2-enyl diphosphate. A [4Fe-4S] cluster-binding site is contributed by Cys198. The (2E)-4-hydroxy-3-methylbut-2-enyl diphosphate site is built by Ser226, Asn228, and Ser271. Residues Ser226, Asn228, and Ser271 each contribute to the dimethylallyl diphosphate site. Residues Ser226, Asn228, and Ser271 each contribute to the isopentenyl diphosphate site.

This sequence belongs to the IspH family. [4Fe-4S] cluster serves as cofactor.

It carries out the reaction isopentenyl diphosphate + 2 oxidized [2Fe-2S]-[ferredoxin] + H2O = (2E)-4-hydroxy-3-methylbut-2-enyl diphosphate + 2 reduced [2Fe-2S]-[ferredoxin] + 2 H(+). The enzyme catalyses dimethylallyl diphosphate + 2 oxidized [2Fe-2S]-[ferredoxin] + H2O = (2E)-4-hydroxy-3-methylbut-2-enyl diphosphate + 2 reduced [2Fe-2S]-[ferredoxin] + 2 H(+). The protein operates within isoprenoid biosynthesis; dimethylallyl diphosphate biosynthesis; dimethylallyl diphosphate from (2E)-4-hydroxy-3-methylbutenyl diphosphate: step 1/1. It functions in the pathway isoprenoid biosynthesis; isopentenyl diphosphate biosynthesis via DXP pathway; isopentenyl diphosphate from 1-deoxy-D-xylulose 5-phosphate: step 6/6. In terms of biological role, catalyzes the conversion of 1-hydroxy-2-methyl-2-(E)-butenyl 4-diphosphate (HMBPP) into a mixture of isopentenyl diphosphate (IPP) and dimethylallyl diphosphate (DMAPP). Acts in the terminal step of the DOXP/MEP pathway for isoprenoid precursor biosynthesis. This is 4-hydroxy-3-methylbut-2-enyl diphosphate reductase from Shouchella clausii (strain KSM-K16) (Alkalihalobacillus clausii).